Consider the following 628-residue polypeptide: Glutamyl-tRNA(Gln) amidotransferase subunit E (628 aa).

The protein belongs to the GatB/GatE family. GatE subfamily. As to quaternary structure, heterodimer of GatD and GatE.

The catalysed reaction is L-glutamyl-tRNA(Gln) + L-glutamine + ATP + H2O = L-glutaminyl-tRNA(Gln) + L-glutamate + ADP + phosphate + H(+). Its function is as follows. Allows the formation of correctly charged Gln-tRNA(Gln) through the transamidation of misacylated Glu-tRNA(Gln) in organisms which lack glutaminyl-tRNA synthetase. The reaction takes place in the presence of glutamine and ATP through an activated gamma-phospho-Glu-tRNA(Gln). The GatDE system is specific for glutamate and does not act on aspartate. This chain is Glutamyl-tRNA(Gln) amidotransferase subunit E, found in Thermococcus gammatolerans (strain DSM 15229 / JCM 11827 / EJ3).